We begin with the raw amino-acid sequence, 279 residues long: Acetylglutamate kinase (279 aa).

Substrate contacts are provided by residues 64-65, Arg-86, and Asn-177; that span reads GG.

Belongs to the acetylglutamate kinase family. ArgB subfamily.

The protein resides in the cytoplasm. The enzyme catalyses N-acetyl-L-glutamate + ATP = N-acetyl-L-glutamyl 5-phosphate + ADP. Its pathway is amino-acid biosynthesis; L-arginine biosynthesis; N(2)-acetyl-L-ornithine from L-glutamate: step 2/4. In terms of biological role, catalyzes the ATP-dependent phosphorylation of N-acetyl-L-glutamate. The sequence is that of Acetylglutamate kinase from Campylobacter jejuni subsp. doylei (strain ATCC BAA-1458 / RM4099 / 269.97).